A 217-amino-acid polypeptide reads, in one-letter code: 3,4-dihydroxy-2-butanone 4-phosphate synthase (217 aa).

D-ribulose 5-phosphate-binding positions include 37–38, D42, 150–154, and E174; these read RE and RGGHT. Residue E38 participates in Mg(2+) binding. Residue H153 participates in Mg(2+) binding.

It belongs to the DHBP synthase family. In terms of assembly, homodimer. Mg(2+) is required as a cofactor. Mn(2+) serves as cofactor.

The enzyme catalyses D-ribulose 5-phosphate = (2S)-2-hydroxy-3-oxobutyl phosphate + formate + H(+). It participates in cofactor biosynthesis; riboflavin biosynthesis; 2-hydroxy-3-oxobutyl phosphate from D-ribulose 5-phosphate: step 1/1. Catalyzes the conversion of D-ribulose 5-phosphate to formate and 3,4-dihydroxy-2-butanone 4-phosphate. This chain is 3,4-dihydroxy-2-butanone 4-phosphate synthase, found in Klebsiella pneumoniae (strain 342).